The sequence spans 641 residues: Choline O-acetyltransferase (641 aa).

A Phosphoserine modification is found at Ser17. Residue His335 is the Proton acceptor of the active site. A Phosphoserine modification is found at Ser366. CoA is bound by residues 413-425 (GKTFIKKQKCSPD), Ser451, and Gln552. The interval 615 to 641 (CSSRQPADSKPPTAKERARGPSQAKQS) is disordered.

This sequence belongs to the carnitine/choline acetyltransferase family.

The catalysed reaction is choline + acetyl-CoA = acetylcholine + CoA. Catalyzes the reversible synthesis of acetylcholine (ACh) from acetyl CoA and choline at cholinergic synapses. The protein is Choline O-acetyltransferase (Chat) of Mus musculus (Mouse).